Here is a 147-residue protein sequence, read N- to C-terminus: Small ribosomal subunit protein eS19 (147 aa).

The protein belongs to the eukaryotic ribosomal protein eS19 family. Part of the 30S ribosomal subunit.

Functionally, may be involved in maturation of the 30S ribosomal subunit. The chain is Small ribosomal subunit protein eS19 from Archaeoglobus fulgidus (strain ATCC 49558 / DSM 4304 / JCM 9628 / NBRC 100126 / VC-16).